Here is a 341-residue protein sequence, read N- to C-terminus: Fructose-1,6-bisphosphatase, cytosolic (341 aa).

The Mg(2+) site is built by Glu71, Glu100, Asp121, Leu123, and Asp124. Residues 124 to 127 (DGSS), Asn215, Tyr247, Tyr267, and Lys277 contribute to the substrate site. Glu283 is a Mg(2+) binding site.

Belongs to the FBPase class 1 family. The cofactor is Mg(2+).

It is found in the cytoplasm. It localises to the nucleus. It catalyses the reaction beta-D-fructose 1,6-bisphosphate + H2O = beta-D-fructose 6-phosphate + phosphate. Catalyzes the first irreversible reaction from fructose-1,6-bisphosphate to fructose-6-phosphate and inorganic phosphate and plays an important regulatory role in sucrose biosynthesis and metabolism. Its activity is essential to regulate starch levels. Functions in fructose-mediated signaling independently of its catalytic activity in sugar metabolism. May act downstream of ABA2/GIN1, which is involved in abscisic acid (ABA) synthesis to regulate autotrophic transition and modulate early seedling establishment after seed germination. This chain is Fructose-1,6-bisphosphatase, cytosolic, found in Arabidopsis thaliana (Mouse-ear cress).